The sequence spans 306 residues: RNA pseudouridylate synthase domain-containing protein 1 (306 aa).

Position 1 is an N-acetylmethionine (Met-1). Asp-67 is an active-site residue. Residues 255 to 290 (RTDPDPDPMSGGPRPCSPSTPQPRPGRPPPETEAQR) form a disordered region. Pro residues predominate over residues 269–285 (PCSPSTPQPRPGRPPPE).

The protein belongs to the pseudouridine synthase RluA family.

The sequence is that of RNA pseudouridylate synthase domain-containing protein 1 (Rpusd1) from Mus musculus (Mouse).